We begin with the raw amino-acid sequence, 316 residues long: tRNA pseudouridine synthase B (316 aa).

The active-site Nucleophile is Asp38. Positions 238 to 312 (YPEVIVKSSA…PVCVLARQAG (75 aa)) constitute a PUA domain.

The protein belongs to the pseudouridine synthase TruB family. Type 1 subfamily.

It catalyses the reaction uridine(55) in tRNA = pseudouridine(55) in tRNA. Its function is as follows. Responsible for synthesis of pseudouridine from uracil-55 in the psi GC loop of transfer RNAs. This chain is tRNA pseudouridine synthase B, found in Pelotomaculum thermopropionicum (strain DSM 13744 / JCM 10971 / SI).